The primary structure comprises 150 residues: Probable cyclase FGR4 (150 aa).

Its pathway is secondary metabolite biosynthesis. Its function is as follows. Probable cyclase; part of the gene cluster that mediates the biosynthesis of the tetraketides fugralins such as linear fugralin A and cyclic fugralin B, volatile compounds that play a role in the asexual reproductive cycle but are not involved in pathogenicity. Fugralin B is similar to fugralin A except for a cyclization between the carboxylic acid C-8 and the alcohol on C-4 resulting in a six membered lactone ring, probably catalyzed by the cyclase FGR4. One of the key features of fugralins is the presence of a double methyl group, which is only rarely encountered in fungal secondary metabolites. As the fugralins cluster does not contain an independent methyltransferase, the PKS FGR1 is probably responsible for adding two methyl groups to the same carbon atom. The exact role of the individual cluster genes remains unknown and further work is needed to unravel the biosynthetic pathway. This is Probable cyclase FGR4 from Gibberella zeae (strain ATCC MYA-4620 / CBS 123657 / FGSC 9075 / NRRL 31084 / PH-1) (Wheat head blight fungus).